We begin with the raw amino-acid sequence, 1247 residues long: Catenin delta-2 (1247 aa).

Disordered stretches follow at residues 1–50 (MFAR…TTSA), 134–238 (SGIL…SAFH), and 256–309 (LPAP…KSYS). The residue at position 7 (S7) is a Phosphoserine. Residues 22–50 (PSASEKNSSLSPGLNTSNGDGSETETTSA) are compositionally biased toward polar residues. Positions 49 to 84 (SAILASVKEQELQFERLTRELEAERQIVASQLERCK) form a coiled coil. Residues 149–160 (SLLSQSALQLNS) show a composition bias toward low complexity. Residues 172–207 (YHSNQTLALGDTAPSQLPARSTQARAAGQSFSQGTT) are compositionally biased toward polar residues. R209 is modified (omega-N-methylarginine). The segment covering 218 to 228 (PAPPPPPPREP) has biased composition (pro residues). R261 carries the post-translational modification Omega-N-methylarginine. Phosphoserine occurs at positions 264 and 273. A compositionally biased stretch (polar residues) spans 265 to 276 (PLTTTQGGSPTK). R279 and R293 each carry omega-N-methylarginine. Positions 296–309 (SPKQSPSRLAKSYS) are enriched in polar residues. Phosphoserine is present on residues S324, S357, S412, and S458. The ARM 1 repeat unit spans residues 391 to 433 (GSRASYSSQHGHLAPELRALQSPEHHIDPIYEDRVYQKPPMRS). The interval 429 to 480 (PPMRSLSQSQGDPLPPAHTGTFRTSTAPSSPGVDSVPLQRTGSQHGPQNAAA) is disordered. Residues 466–475 (LQRTGSQHGP) show a composition bias toward polar residues. The residue at position 511 (S511) is a Phosphoserine. Y513 is modified (phosphotyrosine). Residues 514–533 (SKSGPALPPEGTLARSPSID) are disordered. 8 ARM repeats span residues 537-576 (KDPREFGWRDPELPEVIQMLQHQFPSVQSNAAAYLQHLCF), 579-618 (NKIKAEIRRQGGIQLLVDLLDHRMTEVHRSACGALRNLVY), 623-663 (DDNK…NLSS), 679-721 (LTNA…NVSS), 725-770 (EARR…NLSY), 832-872 (PKGI…NLAA), 904-943 (VYIRAAVRKEKGLPILVELLRIDNDRVVCAVATALRNMAL), and 997-1040 (MENA…SMWQ). 2 disordered regions span residues 1064–1131 (TIER…HTSR) and 1152–1176 (APAEDIKQNQVSTQPVPQEPSRKDY). Over residues 1072-1081 (PYSSSRTPSI) the composition is skewed to polar residues. A phosphoserine mark is found at S1087 and S1098. The span at 1087–1100 (SPNNRSASAPASPR) shows a compositional bias: low complexity. The segment covering 1103–1112 (ISLKERKTDY) has biased composition (basic and acidic residues).

This sequence belongs to the beta-catenin family. As to quaternary structure, binds to E-cadherin at a juxtamembrane site within the cytoplasmic domain. Binds to PSEN1. Interacts with PDZD2. Interacts (via the extreme C-terminus) with FRMPD2 (via the PDZ 2 domain). Interacts with ZBTB33. Interacts with ARHGEF28. Interacts with CDK5. Interacts with CTNNB1. Interacts with GSK3A and GSK3B. Interacts with DNM2. Interacts with CCDC85B. Post-translationally, O-glycosylated. Phosphorylated by CDK5. Phosphorylated by GSK3B. As to expression, expressed in neurons and glial cells. Isoform 2 was found to be the most predominant isoform in various brain regions. Expressed at neuromuscular junctions.

Its subcellular location is the nucleus. The protein localises to the cell junction. It is found in the adherens junction. It localises to the cell projection. The protein resides in the dendrite. Its subcellular location is the perikaryon. Its function is as follows. Has a critical role in neuronal development, particularly in the formation and/or maintenance of dendritic spines and synapses. Involved in the regulation of canonical Wnt signaling. It probably acts on beta-catenin turnover, facilitating beta-catenin interaction with GSK3B, phosphorylation, ubiquitination and degradation. May be involved in neuronal cell adhesion and tissue morphogenesis and integrity by regulating adhesion molecules. Functions as a transcriptional activator when bound to ZBTB33. In Mus musculus (Mouse), this protein is Catenin delta-2 (Ctnnd2).